The chain runs to 253 residues: ATP synthase subunit b 1 (253 aa).

A helical transmembrane segment spans residues 2–22 (LIDWFTVIAELVNFLILVWLL).

The protein belongs to the ATPase B chain family. F-type ATPases have 2 components, F(1) - the catalytic core - and F(0) - the membrane proton channel. F(1) has five subunits: alpha(3), beta(3), gamma(1), delta(1), epsilon(1). F(0) has four main subunits: a(1), b(2) and c(10-14). The alpha and beta chains form an alternating ring which encloses part of the gamma chain. F(1) is attached to F(0) by a central stalk formed by the gamma and epsilon chains, while a peripheral stalk is formed by the delta and b chains.

It localises to the cell inner membrane. In terms of biological role, f(1)F(0) ATP synthase produces ATP from ADP in the presence of a proton or sodium gradient. F-type ATPases consist of two structural domains, F(1) containing the extramembraneous catalytic core and F(0) containing the membrane proton channel, linked together by a central stalk and a peripheral stalk. During catalysis, ATP synthesis in the catalytic domain of F(1) is coupled via a rotary mechanism of the central stalk subunits to proton translocation. Component of the F(0) channel, it forms part of the peripheral stalk, linking F(1) to F(0). This chain is ATP synthase subunit b 1, found in Prosthecochloris aestuarii (strain DSM 271 / SK 413).